Here is a 798-residue protein sequence, read N- to C-terminus: Integrin beta-1 (798 aa).

The first 20 residues, 1–20 (MNLQLIFWIGLISSICCVFG), serve as a signal peptide directing secretion. Over 21–728 (QADENRCLKA…ETPECPTGPD (708 aa)) the chain is Extracellular. A PSI domain is found at 26 to 76 (RCLKANAKSCGECIQAGPNCGWCVNSTFLQEGMPTSARCDDLEALKKKGCH). 28 disulfides stabilise this stretch: C27-C45, C35-C464, C38-C64, C48-C75, C207-C213, C261-C301, C401-C415, C435-C462, C466-C486, C477-C489, C491-C500, C502-C533, C516-C531, C525-C536, C538-C553, C555-C576, C560-C574, C568-C579, C581-C590, C592-C615, C599-C613, C607-C618, C620-C630, C633-C636, C640-C691, C646-C665, C649-C661, and C699-C723. N50 carries N-linked (GlcNAc...) asparagine glycosylation. Positions 75–91 (CHPDDIENPRGSKDVKK) are enriched in basic and acidic residues. The tract at residues 75 to 107 (CHPDDIENPRGSKDVKKNKNVTNRSKGTAEKLQ) is disordered. 2 N-linked (GlcNAc...) asparagine glycosylation sites follow: N94 and N97. In terms of domain architecture, VWFA spans 140 to 378 (DYPIDLYYLM…QLIIDAYNSL (239 aa)). 2 residues coordinate Mg(2+): S152 and S154. Positions 154, 157, 158, and 189 each coordinate Ca(2+). A CX3CL1-binding region spans residues 207–213 (CTSEQNC). A glycan (N-linked (GlcNAc...) asparagine) is linked at N212. Residues N244, D246, P248, and E249 each contribute to the Ca(2+) site. E249 serves as a coordination point for Mg(2+). An N-linked (GlcNAc...) asparagine glycan is attached at N269. A CX3CL1-binding region spans residues 295-314 (LPNDGQCHLENDVYTMSHYY). A362 is a Ca(2+) binding site. N-linked (GlcNAc...) asparagine glycosylation is found at N363, N406, and N417. The tract at residues 383–465 (ILENSKLPEG…IILQFICECE (83 aa)) is interaction with TMEM182. 4 I-EGF domains span residues 466-501 (CQNE…RHCE), 502-554 (CSTD…KFCE), 555-591 (CDNF…SACD), and 592-631 (CSLD…PTCE). The N-linked (GlcNAc...) asparagine glycan is linked to N481. An N-linked (GlcNAc...) asparagine glycan is attached at N520. N584 is a glycosylation site (N-linked (GlcNAc...) asparagine). Residue N669 is glycosylated (N-linked (GlcNAc...) asparagine). A helical membrane pass occupies residues 729-751 (IIPIVAGVVAGIVLIGLALLLIW). At 752 to 798 (KLLMIIHDTREFAKFEKEKMNAKWDTGENPIYKSAVTTVVNPKYEGK) the chain is on the cytoplasmic side. Residues 762–767 (EFAKFE) form a signal for sorting from recycling endosomes; interaction with ACAP1 region. Phosphothreonine is present on T777. Y783 carries the phosphotyrosine modification. S785 carries the phosphoserine modification. The interaction with ITGB1BP1 stretch occupies residues 785-792 (SAVTTVVN). T789 carries the phosphothreonine modification. K794 carries the N6-acetyllysine; alternate modification. Residue K794 forms a Glycyl lysine isopeptide (Lys-Gly) (interchain with G-Cter in SUMO1); alternate linkage.

It belongs to the integrin beta chain family. In terms of assembly, interacts with seprase FAP (seprase); the interaction occurs at the cell surface of invadopodia membrane in a collagen-dependent manner. Heterodimer of an alpha and a beta subunit. Beta-1 associates with either alpha-1, alpha-2, alpha-3, alpha-4, alpha-5, alpha-6, alpha-7, alpha-8, alpha-9, alpha-10, alpha-11 or alpha-V. ITGA6:ITGB1 is found in a complex with CD9; interaction takes place in oocytes and is involved in sperm-egg fusion. Binds LGALS3BP and NMRK2, when associated with alpha-7, but not with alpha-5. Interacts with FLNA, FLNB, FLNC and RANBP9. Interacts with KRT1 in the presence of RACK1 and SRC. Interacts with JAML; integrin alpha-4/beta-1 may regulate leukocyte to endothelial cells adhesion by controlling JAML homodimerization. Interacts with RAB21. Interacts (via the cytoplasmic region) with RAB25 (via the hypervariable C-terminal region). Interacts with MYO10. Interacts with ITGB1BP1 (via C-terminal region); the interaction is a prerequisite for focal adhesion disassembly. Interacts with TLN1; the interaction is prevented by competitive binding of ITGB1BP1. Interacts with ACAP1; required for ITGB1 recycling. Interacts with ASAP3. Interacts with FERMT2; the interaction is inhibited in presence of ITGB1BP1. Interacts with DAB2. Interacts with FGR and HCK. Interacts with alpha-7A and alpha-7B in adult skeletal muscle. Interacts with alpha-7B in cardiomyocytes of adult heart. Interacts with EMP2; the interaction may be direct or indirect and ITGB1 has a heterodimer form. ITGA5:ITGB1 interacts with CCN3. ITGA4:ITGB1 is found in a ternary complex with CX3CR1 and CX3CL1. ITGA5:ITGB1 interacts with FBN1. ITGA5:ITGB1 acts as a receptor for fibronectin FN1 and mediates R-G-D-dependent cell adhesion to FN1. ITGA5:ITGB1 interacts with IL1B. Interacts with MDK. ITGA4:ITGB1 interacts with MDK; this interaction mediates MDK-induced osteoblast cells migration through PXN phosphorylation. ITGA6:ITGB1 interacts with MDK; this interaction mediates MDK-induced neurite-outgrowth. ITGA5:ITGB1 interacts with ACE2. Interacts with TMEM182 and LAMB1. Interacts with tensin TNS3; TNS3 also interacts with PEAK1, thus acting as an adapter molecule to bridge the association of PEAK1 with ITGB1. Interacts with tensin TNS4; the interaction displaces tensin TNS3 from the ITGB1 cytoplasmic tail and promotes ITGB1 stability. Integrin ITGA9:ITGB1 interacts with SPP1/OPN (via N-terminus). Integrin ITGA9:ITGB1 interacts with TNC/TNFN3 (via the 3rd Fibronectin type-III domain). Integrins ITGA4:ITGB1 and ITGA9:ITGB1 interact with SVEP1 (via Sushi domain 21); thereby inhibit Ca(2+) intracellular signaling and as a result repress vasocontraction. ITGA4:ITGB1 and ITGA5:ITGB1 interacts with SELP. Interacts with CD248. ITGA5:ITGB1 interacts with IGFBP1. ITGA4:ITGB1 interacts with BCAM. Interacts with ADGRG6.

The protein localises to the cell membrane. It is found in the cell projection. The protein resides in the invadopodium membrane. It localises to the ruffle membrane. Its subcellular location is the recycling endosome. The protein localises to the melanosome. It is found in the lamellipodium. The protein resides in the ruffle. It localises to the cell junction. Its subcellular location is the focal adhesion. Integrins alpha-1/beta-1, alpha-2/beta-1, alpha-10/beta-1 and alpha-11/beta-1 are receptors for collagen. Integrins alpha-1/beta-1 and alpha-2/beta-2 recognize the proline-hydroxylated sequence G-F-P-G-E-R in collagen. Integrins alpha-2/beta-1, alpha-3/beta-1, alpha-4/beta-1, alpha-5/beta-1, alpha-8/beta-1, alpha-10/beta-1, alpha-11/beta-1 and alpha-V/beta-1 are receptors for fibronectin. Alpha-4/beta-1 recognizes one or more domains within the alternatively spliced CS-1 and CS-5 regions of fibronectin. Integrin alpha-5/beta-1 is a receptor for fibrinogen. Integrin alpha-1/beta-1, alpha-2/beta-1, alpha-6/beta-1 and alpha-7/beta-1 are receptors for lamimin. Integrin alpha-6/beta-1 (ITGA6:ITGB1) is present in oocytes and is involved in sperm-egg fusion. Integrin alpha-4/beta-1 is a receptor for VCAM1 and recognizes the sequence Q-I-D-S in VCAM1. Integrin alpha-9/beta-1 is a receptor for VCAM1, cytotactin and osteopontin. It recognizes the sequence A-E-I-D-G-I-E-L in cytotactin. Integrin alpha-3/beta-1 is a receptor for epiligrin, thrombospondin and CSPG4. Integrin alpha-3/beta-1 provides a docking site for FAP (seprase) at invadopodia plasma membranes in a collagen-dependent manner and hence may participate in the adhesion, formation of invadopodia and matrix degradation processes, promoting cell invasion. Alpha-3/beta-1 may mediate with LGALS3 the stimulation by CSPG4 of endothelial cells migration. Integrin alpha-V/beta-1 is a receptor for vitronectin. Beta-1 integrins recognize the sequence R-G-D in a wide array of ligands. When associated with alpha-7/beta-1 integrin, regulates cell adhesion and laminin matrix deposition. Involved in promoting endothelial cell motility and angiogenesis. Involved in osteoblast compaction through the fibronectin fibrillogenesis cell-mediated matrix assembly process and the formation of mineralized bone nodules. May be involved in up-regulation of the activity of kinases such as PKC via binding to KRT1. Together with KRT1 and RACK1, serves as a platform for SRC activation or inactivation. Plays a mechanistic adhesive role during telophase, required for the successful completion of cytokinesis. ITGA4:ITGB1 binds to fractalkine (CX3CL1) and may act as its coreceptor in CX3CR1-dependent fractalkine signaling. ITGA4:ITGB1 and ITGA5:ITGB1 bind to PLA2G2A via a site (site 2) which is distinct from the classical ligand-binding site (site 1) and this induces integrin conformational changes and enhanced ligand binding to site 1. ITGA5:ITGB1 acts as a receptor for fibrillin-1 (FBN1) and mediates R-G-D-dependent cell adhesion to FBN1. ITGA5:ITGB1 is a receptor for IL1B and binding is essential for IL1B signaling. ITGA5:ITGB3 is a receptor for soluble CD40LG and is required for CD40/CD40LG signaling. Plays an important role in myoblast differentiation and fusion during skeletal myogenesis. ITGA9:ITGB1 may play a crucial role in SVEP1/polydom-mediated myoblast cell adhesion. Integrins ITGA9:ITGB1 and ITGA4:ITGB1 repress PRKCA-mediated L-type voltage-gated channel Ca(2+) influx and ROCK-mediated calcium sensitivity in vascular smooth muscle cells via their interaction with SVEP1, thereby inhibit vasocontraction. The sequence is that of Integrin beta-1 (ITGB1) from Felis catus (Cat).